The sequence spans 615 residues: Dihydroxy-acid dehydratase (615 aa).

D81 contacts Mg(2+). Residue C122 coordinates [2Fe-2S] cluster. The Mg(2+) site is built by D123 and K124. Position 124 is an N6-carboxylysine (K124). C195 serves as a coordination point for [2Fe-2S] cluster. E491 is a Mg(2+) binding site. Residue S517 is the Proton acceptor of the active site.

This sequence belongs to the IlvD/Edd family. In terms of assembly, homodimer. The cofactor is [2Fe-2S] cluster. It depends on Mg(2+) as a cofactor.

It carries out the reaction (2R)-2,3-dihydroxy-3-methylbutanoate = 3-methyl-2-oxobutanoate + H2O. The enzyme catalyses (2R,3R)-2,3-dihydroxy-3-methylpentanoate = (S)-3-methyl-2-oxopentanoate + H2O. It functions in the pathway amino-acid biosynthesis; L-isoleucine biosynthesis; L-isoleucine from 2-oxobutanoate: step 3/4. The protein operates within amino-acid biosynthesis; L-valine biosynthesis; L-valine from pyruvate: step 3/4. Its function is as follows. Functions in the biosynthesis of branched-chain amino acids. Catalyzes the dehydration of (2R,3R)-2,3-dihydroxy-3-methylpentanoate (2,3-dihydroxy-3-methylvalerate) into 2-oxo-3-methylpentanoate (2-oxo-3-methylvalerate) and of (2R)-2,3-dihydroxy-3-methylbutanoate (2,3-dihydroxyisovalerate) into 2-oxo-3-methylbutanoate (2-oxoisovalerate), the penultimate precursor to L-isoleucine and L-valine, respectively. The sequence is that of Dihydroxy-acid dehydratase from Pseudoalteromonas atlantica (strain T6c / ATCC BAA-1087).